The sequence spans 206 residues: Outer-membrane lipoprotein carrier protein (206 aa).

The signal sequence occupies residues 1 to 21 (MKKLLCAVLLSPLLYSNAVLA).

Belongs to the LolA family. Monomer.

The protein localises to the periplasm. Functionally, participates in the translocation of lipoproteins from the inner membrane to the outer membrane. Only forms a complex with a lipoprotein if the residue after the N-terminal Cys is not an aspartate (The Asp acts as a targeting signal to indicate that the lipoprotein should stay in the inner membrane). This is Outer-membrane lipoprotein carrier protein from Shewanella sp. (strain MR-7).